The following is a 472-amino-acid chain: Cysteine--tRNA ligase (472 aa).

C28 is a Zn(2+) binding site. Positions 30–40 (PTVYDYTHIGH) match the 'HIGH' region motif. Zn(2+) contacts are provided by C207, H232, and E236. The 'KMSKS' region motif lies at 264 to 268 (KMSKS). K267 contributes to the ATP binding site.

Belongs to the class-I aminoacyl-tRNA synthetase family. Zn(2+) is required as a cofactor.

The protein resides in the cytoplasm. The enzyme catalyses tRNA(Cys) + L-cysteine + ATP = L-cysteinyl-tRNA(Cys) + AMP + diphosphate. In Aeropyrum pernix (strain ATCC 700893 / DSM 11879 / JCM 9820 / NBRC 100138 / K1), this protein is Cysteine--tRNA ligase (cysS).